The chain runs to 96 residues: Ferredoxin (96 aa).

Positions 4–94 (YKVKLLTPEG…DVVIETHKEE (91 aa)) constitute a 2Fe-2S ferredoxin-type domain. The [2Fe-2S] cluster site is built by Cys40, Cys45, Cys48, and Cys78.

The protein belongs to the 2Fe2S plant-type ferredoxin family. Requires [2Fe-2S] cluster as cofactor.

The protein localises to the plastid. It localises to the chloroplast. Functionally, ferredoxins are iron-sulfur proteins that transfer electrons in a wide variety of metabolic reactions. The protein is Ferredoxin of Panax ginseng (Korean ginseng).